A 310-amino-acid polypeptide reads, in one-letter code: Repression factor of MSEs protein 1 (310 aa).

2 disordered regions span residues 83 to 155 (TQEV…EANA) and 192 to 230 (DGIR…DEGE). The segment covering 92–106 (RNTSSSSSSTRSNSS) has biased composition (low complexity). Polar residues predominate over residues 107–120 (ADISDTEYSGENTP). Residues 127 to 136 (SRRRRTRSRA) are compositionally biased toward basic residues. Residues 139-155 (RENSLPASLPSISEANA) are compositionally biased toward polar residues. Residues 192 to 208 (DGIRRRSSRISERDKRR) show a composition bias toward basic and acidic residues. A Phosphoserine modification is found at serine 215.

Interacts directly with HST1 and SUM1. Required for the interaction between HST1 and SUM1.

Its subcellular location is the nucleus. Tethering factor required for histone deacetylase HST1-mediated repression. Probably involved in targeting HST1 to a subset of SUM1-regulated genes. This is Repression factor of MSEs protein 1 (RFM1) from Saccharomyces cerevisiae (strain ATCC 204508 / S288c) (Baker's yeast).